The primary structure comprises 174 residues: FAD synthase (174 aa).

ATP contacts are provided by residues 34-35 (TF), 39-42 (HPGH), Asp-119, and Tyr-147.

It belongs to the archaeal FAD synthase family. Homodimer. The cofactor is a divalent metal cation.

The catalysed reaction is FMN + ATP + H(+) = FAD + diphosphate. It participates in cofactor biosynthesis; FAD biosynthesis; FAD from FMN: step 1/1. Catalyzes the transfer of the AMP portion of ATP to flavin mononucleotide (FMN) to produce flavin adenine dinucleotide (FAD) coenzyme. The polypeptide is FAD synthase (Methanococcus voltae (strain ATCC BAA-1334 / A3)).